The sequence spans 158 residues: Nuclear cap-binding protein subunit 2 (158 aa).

Residues Tyr17, Tyr40, 109–113 (RADWD), 120–124 (RQYGR), and 130–131 (QV) each bind mRNA. Residues 37–115 (CTLYVGNLSY…RVIRADWDAG (79 aa)) enclose the RRM domain. The segment at 123–158 (GRGKHGGQVRDEYRKDYDPERGGYNRAIAQKGGDRQ) is disordered. Over residues 130–145 (QVRDEYRKDYDPERGG) the composition is skewed to basic and acidic residues.

This sequence belongs to the RRM NCBP2 family. As to quaternary structure, component of the nuclear cap-binding complex (CBC), a heterodimer composed of ncbp-1 and ncbp-2 that interacts with m7GpppG-capped RNA.

The protein localises to the nucleus. Functionally, component of the cap-binding complex (CBC), which binds co-transcriptionally to the 5' cap of pre-mRNAs and is involved in various processes such as pre-mRNA splicing and RNA-mediated gene silencing (RNAi). The CBC complex is involved in miRNA-mediated RNA interference and is required for primary microRNAs (miRNAs) processing. In the CBC complex, ncbp-2 recognizes and binds capped RNAs (m7GpppG-capped RNA) but requires ncbp-1 to stabilize the movement of its N-terminal loop and lock the CBC into a high affinity cap-binding state with the cap structure. The polypeptide is Nuclear cap-binding protein subunit 2 (ncbp-2) (Caenorhabditis elegans).